The primary structure comprises 203 residues: Nudix hydrolase 12, mitochondrial (203 aa).

The Nudix hydrolase domain maps to 18–166 (NFRLVSGCIP…WMQRALEEFL (149 aa)). A Nudix box motif is present at residues 66–87 (GGWEDDETVLEAASREAIEEAG). Mg(2+) is bound by residues glutamate 81 and glutamate 85.

This sequence belongs to the Nudix hydrolase family. Mg(2+) is required as a cofactor. The cofactor is Mn(2+). Expressed in roots, leaves, stems and inflorescences.

It is found in the mitochondrion. Its function is as follows. Probably mediates the hydrolysis of some nucleoside diphosphate derivatives. This is Nudix hydrolase 12, mitochondrial (NUDT12) from Arabidopsis thaliana (Mouse-ear cress).